Consider the following 308-residue polypeptide: Hydroxyacylglutathione hydrolase, mitochondrial (308 aa).

The N-terminal 13 residues, 1–13 (MVVGRGLLGRRSL), are a transit peptide targeting the mitochondrion. Positions 102, 104, 106, and 107 each coordinate Zn(2+). At K116 the chain carries N6-acetyllysine. Zn(2+) is bound by residues H158 and D182. Substrate is bound by residues 191–193 (KFY) and 221–223 (HEY). H221 contributes to the Zn(2+) binding site. Residue K229 is modified to N6-acetyllysine; alternate. An N6-succinyllysine; alternate modification is found at K229. 297–300 (RREK) serves as a coordination point for substrate.

It belongs to the metallo-beta-lactamase superfamily. Glyoxalase II family. As to quaternary structure, monomer. Requires Zn(2+) as cofactor. In terms of tissue distribution, expressed in liver and kidney.

The protein resides in the mitochondrion matrix. The protein localises to the cytoplasm. The catalysed reaction is an S-(2-hydroxyacyl)glutathione + H2O = a 2-hydroxy carboxylate + glutathione + H(+). The enzyme catalyses (R)-S-lactoylglutathione + H2O = (R)-lactate + glutathione + H(+). The protein operates within secondary metabolite metabolism; methylglyoxal degradation; (R)-lactate from methylglyoxal: step 2/2. Its function is as follows. Thiolesterase that catalyzes the hydrolysis of S-D-lactoyl-glutathione to form glutathione and D-lactic acid. The chain is Hydroxyacylglutathione hydrolase, mitochondrial (HAGH) from Homo sapiens (Human).